We begin with the raw amino-acid sequence, 557 residues long: Probable protein kinase UbiB (557 aa).

One can recognise a Protein kinase domain in the interval Ser121–Ala509. Residues Leu127 to Val135 and Lys154 each bind ATP. Asp289 functions as the Proton acceptor in the catalytic mechanism. Helical transmembrane passes span Val506–His526 and Val535–Leu555.

The protein belongs to the ABC1 family. UbiB subfamily.

The protein localises to the cell inner membrane. It functions in the pathway cofactor biosynthesis; ubiquinone biosynthesis [regulation]. Its function is as follows. Is probably a protein kinase regulator of UbiI activity which is involved in aerobic coenzyme Q (ubiquinone) biosynthesis. This is Probable protein kinase UbiB from Xanthomonas euvesicatoria pv. vesicatoria (strain 85-10) (Xanthomonas campestris pv. vesicatoria).